A 183-amino-acid polypeptide reads, in one-letter code: Inosine triphosphate pyrophosphatase (183 aa).

8-13 contributes to the ITP binding site; it reads TGNKNK. Glu-36 contacts Mg(2+). ITP-binding positions include Lys-48, 64-65, Lys-81, 140-143, Lys-161, and 166-167; these read DT, FGWD, and HR.

Belongs to the HAM1 NTPase family. In terms of assembly, homodimer. Requires Mg(2+) as cofactor. The cofactor is Mn(2+).

It is found in the cytoplasm. The protein resides in the nucleus. It catalyses the reaction ITP + H2O = IMP + diphosphate + H(+). The catalysed reaction is dITP + H2O = dIMP + diphosphate + H(+). It carries out the reaction XTP + H2O = XMP + diphosphate + H(+). In terms of biological role, pyrophosphatase that hydrolyzes non-canonical purine nucleotides such as inosine triphosphate (ITP), deoxyinosine triphosphate (dITP) or xanthosine 5'-triphosphate (XTP) to their respective monophosphate derivatives. The enzyme does not distinguish between the deoxy- and ribose forms. Probably excludes non-canonical purines from RNA and DNA precursor pools, thus preventing their incorporation into RNA and DNA and avoiding chromosomal lesions. The protein is Inosine triphosphate pyrophosphatase of Ajellomyces capsulatus (strain G186AR / H82 / ATCC MYA-2454 / RMSCC 2432) (Darling's disease fungus).